Reading from the N-terminus, the 256-residue chain is Sec-independent protein translocase protein TatC (256 aa).

6 helical membrane passes run 25 to 45 (VICV…IYHF), 77 to 97 (AIVA…AFIA), 117 to 137 (ILFY…VFSF), 158 to 178 (FALA…AIIL), 195 to 215 (PYII…DVFS), and 217 to 237 (TLLA…ARFY).

This sequence belongs to the TatC family. As to quaternary structure, the Tat system comprises two distinct complexes: a TatABC complex, containing multiple copies of TatA, TatB and TatC subunits, and a separate TatA complex, containing only TatA subunits. Substrates initially bind to the TatABC complex, which probably triggers association of the separate TatA complex to form the active translocon.

The protein localises to the cell inner membrane. In terms of biological role, part of the twin-arginine translocation (Tat) system that transports large folded proteins containing a characteristic twin-arginine motif in their signal peptide across membranes. Together with TatB, TatC is part of a receptor directly interacting with Tat signal peptides. In Haemophilus influenzae (strain ATCC 51907 / DSM 11121 / KW20 / Rd), this protein is Sec-independent protein translocase protein TatC.